The chain runs to 526 residues: 2-succinyl-5-enolpyruvyl-6-hydroxy-3-cyclohexene-1-carboxylate synthase (526 aa).

Belongs to the TPP enzyme family. MenD subfamily. Homodimer. Mg(2+) is required as a cofactor. Mn(2+) serves as cofactor. It depends on thiamine diphosphate as a cofactor.

The catalysed reaction is isochorismate + 2-oxoglutarate + H(+) = 5-enolpyruvoyl-6-hydroxy-2-succinyl-cyclohex-3-ene-1-carboxylate + CO2. It functions in the pathway quinol/quinone metabolism; 1,4-dihydroxy-2-naphthoate biosynthesis; 1,4-dihydroxy-2-naphthoate from chorismate: step 2/7. The protein operates within quinol/quinone metabolism; menaquinone biosynthesis. Its function is as follows. Catalyzes the thiamine diphosphate-dependent decarboxylation of 2-oxoglutarate and the subsequent addition of the resulting succinic semialdehyde-thiamine pyrophosphate anion to isochorismate to yield 2-succinyl-5-enolpyruvyl-6-hydroxy-3-cyclohexene-1-carboxylate (SEPHCHC). This is 2-succinyl-5-enolpyruvyl-6-hydroxy-3-cyclohexene-1-carboxylate synthase from Bdellovibrio bacteriovorus (strain ATCC 15356 / DSM 50701 / NCIMB 9529 / HD100).